A 365-amino-acid polypeptide reads, in one-letter code: H-2 class I histocompatibility antigen, D-D alpha chain (365 aa).

The N-terminal stretch at 1–24 (MGAMAPRTLLLLLAAALGPTQTRA) is a signal peptide. Positions 25–114 (GSHSLRYFVT…ALRYYNQSAG (90 aa)) are alpha-1. The Extracellular segment spans residues 25 to 311 (GSHSLRYFVT…EPPSSTKTNT (287 aa)). N-linked (GlcNAc...) asparagine glycosylation is present at Asn110. Residues 115 to 206 (GSHTLQWMAG…KNGNATLLRT (92 aa)) are alpha-2. Residues Cys125 and Cys188 are joined by a disulfide bond. Asn200 carries N-linked (GlcNAc...) asparagine glycosylation. Residues 207–298 (DPPKAHVTHH…GLPEPLTLRW (92 aa)) are alpha-3. Residues 209–297 (PKAHVTHHRR…EGLPEPLTLR (89 aa)) form the Ig-like C1-type domain. Cys227 and Cys283 are oxidised to a cystine. The segment at 299–311 (GKEEPPSSTKTNT) is connecting peptide. A helical transmembrane segment spans residues 312–334 (VIIAVPVVLGAVVILGAVMAFVM). The Cytoplasmic portion of the chain corresponds to 335–365 (KRRRNTGGKGGDYALAPGSQSSDMSLPDCKV). The interval 343-365 (KGGDYALAPGSQSSDMSLPDCKV) is disordered. Ser356 and Ser359 each carry phosphoserine.

The protein belongs to the MHC class I family. In terms of assembly, heterodimer of an alpha chain and a beta chain (beta-2-microglobulin).

The protein resides in the membrane. Its function is as follows. Involved in the presentation of foreign antigens to the immune system. The chain is H-2 class I histocompatibility antigen, D-D alpha chain (H2-D1) from Mus musculus (Mouse).